The chain runs to 683 residues: Inositol-trisphosphate 3-kinase C (683 aa).

A disordered region spans residues 1–124 (MRRCPCRGSL…PDRSSLRTHL (124 aa)). Positions 13 to 22 (AEAGALPAAA) are enriched in low complexity. Over residues 44-58 (PGAGAPAGRPEGGGP) the composition is skewed to gly residues. Residues 105 to 124 (ETERPKQKTEPDRSSLRTHL) show a composition bias toward basic and acidic residues. A phosphoserine mark is found at serine 127 and serine 162. The interval 147–308 (TDPHRSDLQF…EDGPLEEPEP (162 aa)) is disordered. Residues 196-206 (WTHQNSSSLQT) are compositionally biased toward polar residues. Positions 249 to 259 (SQKKQDTEAAR) are enriched in basic and acidic residues. A compositionally biased stretch (polar residues) spans 267-289 (FQIQQDTDGSWTQPSTDGSQTAP). A compositionally biased stretch (acidic residues) spans 297–308 (EPEDGPLEEPEP). The Nuclear export signal signature appears at 324–332 (LCPVPRLII). The disordered stretch occupies residues 334–387 (PETPEPEAQPVGPPSRVEGGSGGFSSASSFDESEDDVVAGGGGASDPEDRSGSK). Threonine 336 carries the phosphothreonine modification. A Phosphoserine modification is found at serine 404. ATP is bound by residues lysine 431, 471-473 (EDL), and aspartate 484. Residues lysine 486, 507 to 513 (RKDMYEK), and 534 to 541 (KPRYMQWR) each bind substrate. Residues 509–517 (DMYEKMVAV) are calmodulin-binding. Residues lysine 558 and aspartate 638 each coordinate ATP. Lysine 641 provides a ligand contact to substrate.

Belongs to the inositol phosphokinase (IPK) family. In terms of tissue distribution, highly expressed in pancreas, skeletal muscle, liver, placenta and weakly in kidney and brain.

The protein resides in the nucleus. It is found in the cytoplasm. The catalysed reaction is 1D-myo-inositol 1,4,5-trisphosphate + ATP = 1D-myo-inositol 1,3,4,5-tetrakisphosphate + ADP + H(+). Activated by calcium/calmodulin. Inhibited by high concentrations of the substrate Ins(1,2,4)P3, and allosterically activated by the product Ins(1,3,4,5)P4. Its function is as follows. Catalyzes the phosphorylation of 1D-myo-inositol 1,4,5-trisphosphate (InsP3) into 1D-myo-inositol 1,3,4,5-tetrakisphosphate and participates to the regulation of calcium homeostasis. Can phosphorylate inositol 2,4,5-triphosphate to inositol 2,4,5,6-tetraphosphate. The protein is Inositol-trisphosphate 3-kinase C of Homo sapiens (Human).